The following is a 901-amino-acid chain: HTH-type transcriptional regulator MalT (901 aa).

39-46 is an ATP binding site; the sequence is SPAGYGKT. An HTH luxR-type domain is found at 829–894; it reads ELIRTSPLTQ…AAVQHAQKLL (66 aa). Residues 853–872 constitute a DNA-binding region (H-T-H motif); that stretch reads NEQIAGELEVAATTIKTHIR.

Belongs to the MalT family. As to quaternary structure, monomer in solution. Oligomerizes to an active state in the presence of the positive effectors ATP and maltotriose.

Its activity is regulated as follows. Activated by ATP and maltotriose, which are both required for DNA binding. Its function is as follows. Positively regulates the transcription of the maltose regulon whose gene products are responsible for uptake and catabolism of malto-oligosaccharides. Specifically binds to the promoter region of its target genes, recognizing a short DNA motif called the MalT box. This is HTH-type transcriptional regulator MalT from Escherichia coli O127:H6 (strain E2348/69 / EPEC).